The primary structure comprises 262 residues: Cutinase 1 (262 aa).

Tyrosine 61 lines the poly(ethylene terephthalate) pocket. Residue serine 131 is the Nucleophile of the active site. The poly(ethylene terephthalate) site is built by methionine 132 and tryptophan 156. Residues aspartate 177 and histidine 209 each act as charge relay system in the active site. A disulfide bond links cysteine 242 and cysteine 260.

Belongs to the AB hydrolase superfamily.

It is found in the secreted. The protein localises to the periplasm. It catalyses the reaction (ethylene terephthalate)(n) + H2O = (ethylene terephthalate)(n-1) + 4-[(2-hydroxyethoxy)carbonyl]benzoate + H(+). It carries out the reaction a butanoate ester + H2O = an aliphatic alcohol + butanoate + H(+). The enzyme catalyses an acetyl ester + H2O = an aliphatic alcohol + acetate + H(+). The catalysed reaction is cutin + H2O = cutin monomers.. Its function is as follows. Catalyzes the hydrolysis of cutin, a polyester that forms the structure of plant cuticle. Shows esterase activity towards p-nitrophenol-linked aliphatic esters (pNP-aliphatic esters). Capable of degrading the plastic poly(ethylene terephthalate) (PET), the most abundant polyester plastic in the world. Capable of degrading the bioplastic poly(lactic acid) (PLLA). This chain is Cutinase 1, found in Thermobifida cellulosilytica.